The primary structure comprises 398 residues: Acetate kinase (398 aa).

Residue Asn8 coordinates Mg(2+). Residue Lys15 participates in ATP binding. Residue Arg92 participates in substrate binding. Catalysis depends on Asp149, which acts as the Proton donor/acceptor. Residues 209–213 (HLGNG), 283–285 (DFR), and 331–335 (GVGEN) each bind ATP. Glu385 is a Mg(2+) binding site.

This sequence belongs to the acetokinase family. As to quaternary structure, homodimer. The cofactor is Mg(2+). Mn(2+) is required as a cofactor.

It is found in the cytoplasm. The catalysed reaction is acetate + ATP = acetyl phosphate + ADP. The protein operates within metabolic intermediate biosynthesis; acetyl-CoA biosynthesis; acetyl-CoA from acetate: step 1/2. Functionally, catalyzes the formation of acetyl phosphate from acetate and ATP. Can also catalyze the reverse reaction. This chain is Acetate kinase, found in Corynebacterium efficiens (strain DSM 44549 / YS-314 / AJ 12310 / JCM 11189 / NBRC 100395).